A 131-amino-acid chain; its full sequence is Small ribosomal subunit protein eS24 (131 aa).

The segment at 93 to 131 (RHGLYEKKKTSRKQRKERKNRMKKVRGTKKASVGAAGKK) is disordered. The span at 101-121 (KTSRKQRKERKNRMKKVRGTK) shows a compositional bias: basic residues.

The protein belongs to the eukaryotic ribosomal protein eS24 family. As to quaternary structure, component of the small ribosomal subunit. Part of the small subunit (SSU) processome, composed of more than 70 proteins and the RNA chaperone small nucleolar RNA (snoRNA) U3.

It is found in the cytoplasm. The protein localises to the nucleus. It localises to the nucleolus. Functionally, component of the small ribosomal subunit. The ribosome is a large ribonucleoprotein complex responsible for the synthesis of proteins in the cell. Required for processing of pre-rRNA and maturation of 40S ribosomal subunits. Part of the small subunit (SSU) processome, first precursor of the small eukaryotic ribosomal subunit. During the assembly of the SSU processome in the nucleolus, many ribosome biogenesis factors, an RNA chaperone and ribosomal proteins associate with the nascent pre-rRNA and work in concert to generate RNA folding, modifications, rearrangements and cleavage as well as targeted degradation of pre-ribosomal RNA by the RNA exosome. This Ictalurus punctatus (Channel catfish) protein is Small ribosomal subunit protein eS24 (rps24).